A 398-amino-acid chain; its full sequence is Lipase member K (398 aa).

The N-terminal stretch at 1–19 (MWWLLATTCCVLLSGPIDG) is a signal peptide. The AB hydrolase-1 domain maps to 78–377 (VVYLQHGLIA…HYNHMDFYLG (300 aa)). The active-site Nucleophile is the S171. The cysteines at positions 245 and 254 are disulfide-linked. Residues N270 and N326 are each glycosylated (N-linked (GlcNAc...) asparagine). Catalysis depends on charge relay system residues D342 and H371.

Belongs to the AB hydrolase superfamily. Lipase family.

Its subcellular location is the secreted. Its function is as follows. Plays a highly specific role in the last step of keratinocyte differentiation. May have an essential function in lipid metabolism of the most differentiated epidermal layers. This chain is Lipase member K (Lipk), found in Mus musculus (Mouse).